A 451-amino-acid chain; its full sequence is GTPase Der (451 aa).

2 EngA-type G domains span residues 5 to 170 (PVVA…VAPP) and 186 to 359 (IKLA…AAAF). GTP is bound by residues 11 to 18 (GRPNVGKS), 58 to 62 (DTGGF), 122 to 125 (NKAE), 192 to 199 (GRPNVGKS), 239 to 243 (DTAGL), and 304 to 307 (NKWD). The KH-like domain maps to 360–444 (AKLSTPRLTR…PLRIEFKSSR (85 aa)).

This sequence belongs to the TRAFAC class TrmE-Era-EngA-EngB-Septin-like GTPase superfamily. EngA (Der) GTPase family. As to quaternary structure, associates with the 50S ribosomal subunit.

Its function is as follows. GTPase that plays an essential role in the late steps of ribosome biogenesis. The chain is GTPase Der from Bordetella bronchiseptica (strain ATCC BAA-588 / NCTC 13252 / RB50) (Alcaligenes bronchisepticus).